The sequence spans 273 residues: Cyclic di-AMP synthase CdaA (273 aa).

3 helical membrane passes run 12-32 (LGNAVDILLVWYVIYKLIMVI), 40-60 (LLKGIVVIVLVRMASQYLGLS), and 61-81 (TLQWLMDQAITWGFLAIIIIF). Residues 82 to 242 (QPELRRALEQ…NGDLHRELTE (161 aa)) enclose the DAC domain.

This sequence belongs to the adenylate cyclase family. DacA/CdaA subfamily. Probably a homodimer. Interacts with CdaR. May interact with GlmM.

The protein localises to the cell membrane. The enzyme catalyses 2 ATP = 3',3'-c-di-AMP + 2 diphosphate. Its activity is regulated as follows. DAC activity is stimulated about 20-fold in E.coli by coexpression with CdaR. Its function is as follows. One of 3 paralogous diadenylate cyclases (DAC) in this bacteria, catalyzing the condensation of 2 ATP molecules into cyclic di-AMP (c-di-AMP). Upon expression in E.coli leads to c-di-AMP synthesis. Probably the main producer of c-di-AMP for the cell; is probably implicated in control of peptidoglycan synthesis. In B.subtilis c-di-AMP is a second messenger that mediates growth, DNA repair and cell wall homeostasis; it is toxic when present in excess. The polypeptide is Cyclic di-AMP synthase CdaA (Bacillus subtilis (strain 168)).